The following is a 284-amino-acid chain: GPN-loop GTPase 3 (284 aa).

Residue 13-18 (GSGKST) coordinates GTP. Positions 72 to 74 (GPN) match the Gly-Pro-Asn (GPN)-loop; involved in dimer interface motif. 174-177 (TKMD) lines the GTP pocket.

This sequence belongs to the GPN-loop GTPase family. As to quaternary structure, heterodimer with GPN1. Binds to RNA polymerase II (RNAPII). Interacts directly with subunits RPB4 and RPB7 and the CTD of RPB1.

Its function is as follows. Small GTPase required for proper localization of RNA polymerase II (RNAPII). May act at an RNAP assembly step prior to nuclear import. This chain is GPN-loop GTPase 3, found in Homo sapiens (Human).